Here is a 2145-residue protein sequence, read N- to C-terminus: Glutamate synthase [NADH] (2145 aa).

A propeptide spanning residues 1–53 is cleaved from the precursor; sequence MPVLKSDNFDPLEEAYEGGTIQNYNDEHHLHKSWANVIPDKRGLYDPDYEHDA. Cysteine 54 acts as the For GATase activity in catalysis. Residues 54-455 form the Glutamine amidotransferase type-2 domain; sequence CGVGFVANKH…PGDLFLVDTQ (402 aa). Position 1132–1189 (1132–1189) interacts with FMN; sequence LAETHQTLVLNDLRRNVVVQTDGQLRTGFDIAVAVLLGAESFTLATVPLIAMGCVMLR. Cysteine 1185, cysteine 1191, and cysteine 1196 together coordinate [3Fe-4S] cluster. The stretch at 1551-1600 forms a coiled coil; sequence KKVLLKEKAEAAKAKAKATSEYLKKFRSNQEVDDEVNTLLIANQKAKEQE. 1928-1942 provides a ligand contact to NAD(+); sequence GGGDTGNDCLGTSVR. A Phosphothreonine modification is found at threonine 2070.

This sequence belongs to the glutamate synthase family. Homotrimer. [3Fe-4S] cluster serves as cofactor. Requires FAD as cofactor. FMN is required as a cofactor.

It carries out the reaction 2 L-glutamate + NAD(+) = L-glutamine + 2-oxoglutarate + NADH + H(+). It participates in amino-acid biosynthesis; L-glutamate biosynthesis via GLT pathway; L-glutamate from 2-oxoglutarate and L-glutamine (NAD(+) route): step 1/1. Its pathway is energy metabolism; nitrogen metabolism. With respect to regulation, inhibited by homocysteine sulfonamide. Functionally, forms L-glutamate from L-glutamine and 2-oxoglutarate. Represents an alternative pathway to L-glutamate dehydrogenase for the biosynthesis of L-glutamate. Participates with glutamine synthetase in ammonia assimilation processes. The enzyme is specific for NADH, L-glutamine and 2-oxoglutarate. This is Glutamate synthase [NADH] (GLT1) from Saccharomyces cerevisiae (strain ATCC 204508 / S288c) (Baker's yeast).